A 386-amino-acid chain; its full sequence is tRNA N6-adenosine threonylcarbamoyltransferase (386 aa).

Positions 112 and 116 each coordinate Fe cation. Substrate contacts are provided by residues 134–138 (LASGG), Asp-167, Gly-180, and Asn-322. Asp-350 contacts Fe cation.

Belongs to the KAE1 / TsaD family. Fe(2+) is required as a cofactor.

It localises to the cytoplasm. The enzyme catalyses L-threonylcarbamoyladenylate + adenosine(37) in tRNA = N(6)-L-threonylcarbamoyladenosine(37) in tRNA + AMP + H(+). Its function is as follows. Required for the formation of a threonylcarbamoyl group on adenosine at position 37 (t(6)A37) in tRNAs that read codons beginning with adenine. Is involved in the transfer of the threonylcarbamoyl moiety of threonylcarbamoyl-AMP (TC-AMP) to the N6 group of A37, together with TsaE and TsaB. TsaD likely plays a direct catalytic role in this reaction. This Rickettsia akari (strain Hartford) protein is tRNA N6-adenosine threonylcarbamoyltransferase.